We begin with the raw amino-acid sequence, 460 residues long: Serine hydroxymethyltransferase, cytosolic (460 aa).

An N6-(pyridoxal phosphate)lysine modification is found at Lys244.

This sequence belongs to the SHMT family. As to quaternary structure, homotetramer. The cofactor is pyridoxal 5'-phosphate.

The protein localises to the cytoplasm. It catalyses the reaction (6R)-5,10-methylene-5,6,7,8-tetrahydrofolate + glycine + H2O = (6S)-5,6,7,8-tetrahydrofolate + L-serine. It participates in one-carbon metabolism; tetrahydrofolate interconversion. In terms of biological role, interconversion of serine and glycine. This chain is Serine hydroxymethyltransferase, cytosolic (SHMT-1), found in Encephalitozoon cuniculi (strain GB-M1) (Microsporidian parasite).